The sequence spans 512 residues: MEEFKGYLQKGGFKQQHFLYPLLFQEYIYALAHDQGLNVNASTFNEPPEISGYGNKYSSLLVKRLITRIYQQNSFIYSVNNSKQNRFVGHNKNFYYKMISEGFAIVVEIPFSLRLVSSLKEKKEITKSQNLRSIHSLFPFLEDKFSHLNYVSDILIPYPVHLEILVQILQCWIQDLPTLHLLRLIFHDYHNGSNSIPPNKSSFGFSKDNPRLYRFLYNSYVVECESIFDFLRKSSSYLRSTSFGPLLERTHFYGKMKHIGVTCCNDFQKTLWLFKDPFMHYVRYQGKCIMASKGTHLLMKKWKSYFVNLWQCHFHFWSQPSRIHINQFPHFSFYLLGYLSSVPINPSSAKSQMLENSFLIDSFTPKFETMISIIPMIGSLAKAKFCNLSGNPISKPAWADLSDSDIIDRFGRIYRNLSHYYSGSSKKQSLYRIKYILRLSCARTLARKHKSTVRAFLQRLGSEFFEEFFMEQEKVLSLILPRTSYPLHQLSREPIWYLDIIRINDLVNHFDL.

This sequence belongs to the intron maturase 2 family. MatK subfamily.

It localises to the plastid. The protein resides in the chloroplast. Its function is as follows. Usually encoded in the trnK tRNA gene intron. Probably assists in splicing its own and other chloroplast group II introns. This is Maturase K from Lemna minor (Common duckweed).